The primary structure comprises 430 residues: Enolase (430 aa).

Residue Q163 coordinates (2R)-2-phosphoglycerate. The Proton donor role is filled by E205. The Mg(2+) site is built by D242, E285, and D312. Residues K337, R366, S367, and K388 each contribute to the (2R)-2-phosphoglycerate site. The Proton acceptor role is filled by K337.

It belongs to the enolase family. Mg(2+) is required as a cofactor.

It is found in the cytoplasm. Its subcellular location is the secreted. The protein resides in the cell surface. The enzyme catalyses (2R)-2-phosphoglycerate = phosphoenolpyruvate + H2O. It participates in carbohydrate degradation; glycolysis; pyruvate from D-glyceraldehyde 3-phosphate: step 4/5. Its function is as follows. Catalyzes the reversible conversion of 2-phosphoglycerate (2-PG) into phosphoenolpyruvate (PEP). It is essential for the degradation of carbohydrates via glycolysis. In Rubrobacter xylanophilus (strain DSM 9941 / JCM 11954 / NBRC 16129 / PRD-1), this protein is Enolase.